The sequence spans 39 residues: Photosystem II reaction center protein L (39 aa).

A helical transmembrane segment spans residues 18 to 38; sequence SLYLGLLLVFVLGILFSSYFF.

The protein belongs to the PsbL family. As to quaternary structure, PSII is composed of 1 copy each of membrane proteins PsbA, PsbB, PsbC, PsbD, PsbE, PsbF, PsbH, PsbI, PsbJ, PsbK, PsbL, PsbM, PsbT, PsbX, PsbY, Psb30/Ycf12, peripheral proteins PsbO, CyanoQ (PsbQ), PsbU, PsbV and a large number of cofactors. It forms dimeric complexes.

Its subcellular location is the cellular thylakoid membrane. One of the components of the core complex of photosystem II (PSII). PSII is a light-driven water:plastoquinone oxidoreductase that uses light energy to abstract electrons from H(2)O, generating O(2) and a proton gradient subsequently used for ATP formation. It consists of a core antenna complex that captures photons, and an electron transfer chain that converts photonic excitation into a charge separation. This subunit is found at the monomer-monomer interface and is required for correct PSII assembly and/or dimerization. The sequence is that of Photosystem II reaction center protein L from Prochlorococcus marinus (strain SARG / CCMP1375 / SS120).